Reading from the N-terminus, the 2226-residue chain is DNA polymerase epsilon catalytic subunit A (2226 aa).

Residues arginine 1240 to arginine 1265 are disordered. 4 residues coordinate Zn(2+): cysteine 2112, cysteine 2115, cysteine 2134, and cysteine 2137. Residues cysteine 2112 to cysteine 2137 form a CysA-type zinc finger. [4Fe-4S] cluster is bound by residues cysteine 2168, cysteine 2171, cysteine 2183, and cysteine 2185. Positions cysteine 2168–cysteine 2185 match the CysB motif motif.

This sequence belongs to the DNA polymerase type-B family. Heterotetramer. Consists of 4 subunits: POL2, DPB2, DPB3 and DPB4. Requires [4Fe-4S] cluster as cofactor.

It is found in the nucleus. The enzyme catalyses DNA(n) + a 2'-deoxyribonucleoside 5'-triphosphate = DNA(n+1) + diphosphate. DNA polymerase II participates in chromosomal DNA replication. The sequence is that of DNA polymerase epsilon catalytic subunit A (POL2) from Debaryomyces hansenii (strain ATCC 36239 / CBS 767 / BCRC 21394 / JCM 1990 / NBRC 0083 / IGC 2968) (Yeast).